Here is a 131-residue protein sequence, read N- to C-terminus: Small ribosomal subunit protein uS8 (131 aa).

It belongs to the universal ribosomal protein uS8 family. As to quaternary structure, part of the 30S ribosomal subunit. Contacts proteins S5 and S12.

Its function is as follows. One of the primary rRNA binding proteins, it binds directly to 16S rRNA central domain where it helps coordinate assembly of the platform of the 30S subunit. The protein is Small ribosomal subunit protein uS8 of Delftia acidovorans (strain DSM 14801 / SPH-1).